The primary structure comprises 75 residues: UPF0270 protein Pfl01_4103 (75 aa).

Belongs to the UPF0270 family.

In Pseudomonas fluorescens (strain Pf0-1), this protein is UPF0270 protein Pfl01_4103.